A 1388-amino-acid polypeptide reads, in one-letter code: Rho-associated protein kinase 2 (1388 aa).

Residues Met-1–Arg-26 form a disordered region. The Protein kinase domain occupies Tyr-92 to Phe-354. ATP is bound by residues Ile-98 to Val-106 and Lys-121. Asp-214 (proton acceptor) is an active-site residue. The 69-residue stretch at Asp-357 to Ser-425 folds into the AGC-kinase C-terminal domain. The interaction with PPP1R12A stretch occupies residues Asn-363 to Val-784. The interval Pro-373–Leu-420 is interaction with NPM1. The residue at position 414 (Thr-414) is a Phosphothreonine; by ROCK2. The stretch at Ser-439–Asp-1131 forms a coiled coil. The REM-1 domain occupies Thr-497–Thr-573. A compositionally biased stretch (basic and acidic residues) spans Asn-512–Glu-530. Residues Asn-512–Asp-532 are disordered. Tyr-722 carries the post-translational modification Phosphotyrosine; by SRC. In terms of domain architecture, RhoBD spans Thr-979–Pro-1047. The RHOA binding stretch occupies residues Thr-979–Pro-1047. The residue at position 1137 (Ser-1137) is a Phosphoserine. The PH domain maps to Glu-1150–Pro-1349. The residue at position 1212 (Thr-1212) is a Phosphothreonine. A Phorbol-ester/DAG-type zinc finger spans residues Gly-1260–Cys-1315. Positions Val-1345 to Ser-1388 are disordered. Phosphoserine is present on residues Ser-1362 and Ser-1374. The segment covering Ser-1362 to Arg-1376 has biased composition (polar residues).

Belongs to the protein kinase superfamily. AGC Ser/Thr protein kinase family. Homodimer. Interacts with IRS1. Interacts with RAF1. Interacts with RHOA (activated by GTP), RHOB and RHOC. Interacts with PPP1R12A. Interacts with EP300. Interacts with CHORDC1. Interacts with BRCA2. Interacts with NPM1; this interaction enhances ROCK2 activity. Interacts with SORL1. Interacts with PJVK. The cofactor is Mg(2+). Post-translationally, autophosphorylated. Phosphorylation at Tyr-722 reduces its binding to RHOA and is crucial for focal adhesion dynamics. Dephosphorylation by PTPN11 stimulates its RHOA binding activity. Cleaved by granzyme B during apoptosis. This leads to constitutive activation of the kinase and membrane blebbing. Highly expressed in brain, heart, lung, liver, stomach, spleen, kidney, testis, muscle, embryo and placenta. Isoform 2 is expressed predominantly in the skeletal muscle.

The protein localises to the cytoplasm. It localises to the cell membrane. Its subcellular location is the nucleus. The protein resides in the cytoskeleton. It is found in the microtubule organizing center. The protein localises to the centrosome. It carries out the reaction L-seryl-[protein] + ATP = O-phospho-L-seryl-[protein] + ADP + H(+). The catalysed reaction is L-threonyl-[protein] + ATP = O-phospho-L-threonyl-[protein] + ADP + H(+). Its activity is regulated as follows. Activated by RHOA binding. Inhibited by Y-27632. Functionally, protein kinase which is a key regulator of actin cytoskeleton and cell polarity. Involved in regulation of smooth muscle contraction, actin cytoskeleton organization, stress fiber and focal adhesion formation, neurite retraction, cell adhesion and motility via phosphorylation of ADD1, BRCA2, CNN1, EZR, DPYSL2, EP300, MSN, MYL9/MLC2, NPM1, RDX, PPP1R12A and VIM. Phosphorylates SORL1 and IRF4. Acts as a negative regulator of VEGF-induced angiogenic endothelial cell activation. Positively regulates the activation of p42/MAPK1-p44/MAPK3 and of p90RSK/RPS6KA1 during myogenic differentiation. Plays an important role in the timely initiation of centrosome duplication. Inhibits keratinocyte terminal differentiation. May regulate closure of the eyelids and ventral body wall through organization of actomyosin bundles. Plays a critical role in the regulation of spine and synaptic properties in the hippocampus. Plays a role in placental homeostasis during the perinatal period. Plays an important role in generating the circadian rhythm of the aortic myofilament Ca(2+) sensitivity and vascular contractility by modulating the myosin light chain phosphorylation. This chain is Rho-associated protein kinase 2 (Rock2), found in Mus musculus (Mouse).